Reading from the N-terminus, the 281-residue chain is Para-Rep C1 (281 aa).

The 95-residue stretch at 3–97 (TLQGTFWCFT…VAGPWTYGEL (95 aa)) folds into the CRESS-DNA virus Rep endonuclease domain. Positions 10–13 (CFTL) match the RCR-1 motif. A divalent metal cation contacts are provided by Glu36 and His42. An RCR-2 motif is present at residues 42–44 (HLQ). The Nuclear localization signal motif lies at 51–71 (KRSTLKMMKELLPGAHLEVSK). Tyr80 serves as the catalytic For DNA cleavage activity. The short motif at 80–83 (YAMK) is the RCR-3 element. Glu85 is a binding site for a divalent metal cation. Residues 97 to 103 (LLKKGSN) carry the Nuclear localization signal motif. 173-181 (GPQGGEGKT) contributes to the ATP binding site.

Belongs to the nanoviridea/circoviridae replication-associated protein family. In terms of assembly, homooligomer (Potential). Rep binds to repeated DNA motifs (iterons). Requires Mg(2+) as cofactor. The cofactor is Mn(2+).

It is found in the host nucleus. It carries out the reaction ATP + H2O = ADP + phosphate + H(+). Initiates and terminates the replication only of its own subviral DNA molecule. The closed circular ssDNA genome is first converted to a superhelical dsDNA. Rep binds a specific hairpin at the genome origin of replication. Introduces an endonucleolytic nick within the intergenic region of the genome, thereby initiating the rolling circle replication (RCR). Following cleavage, binds covalently to the 5'-phosphate of DNA as a tyrosyl ester. The cleavage gives rise to a free 3'-OH that serves as a primer for the cellular DNA polymerase. The polymerase synthesizes the (+) strand DNA by rolling circle mechanism. After one round of replication, a Rep-catalyzed nucleotidyl transfer reaction releases a circular single-stranded virus genome, thereby terminating the replication. Displays origin-specific DNA cleavage, nucleotidyl transferase, ATPase and helicase activities. The polypeptide is Para-Rep C1 (C1) (Milk vetch dwarf C1 alphasatellite (MVDC1A)).